Consider the following 249-residue polypeptide: Ribosomal RNA small subunit methyltransferase J (249 aa).

S-adenosyl-L-methionine-binding positions include Arg-101–Asp-102, Glu-117–Arg-118, and Asp-171.

Belongs to the methyltransferase superfamily. RsmJ family.

Its subcellular location is the cytoplasm. The enzyme catalyses guanosine(1516) in 16S rRNA + S-adenosyl-L-methionine = N(2)-methylguanosine(1516) in 16S rRNA + S-adenosyl-L-homocysteine + H(+). In terms of biological role, specifically methylates the guanosine in position 1516 of 16S rRNA. The polypeptide is Ribosomal RNA small subunit methyltransferase J (Tolumonas auensis (strain DSM 9187 / NBRC 110442 / TA 4)).